The sequence spans 333 residues: MKKMVQIKYKEVKTKRVNDYETTFKIEPLERGFGSTIGTALRRTLLSSITSVVPFAIKIKDVDQEFDTISDIVEDVQMIMLNVKNIHLVYDENIFEDNKIYRGVIETKNEKITSSDLKFPENPEIEIVNKDLEIATNNGQKPFVMEVYFHVGRGYISFEDNKKLIEEKVALLNSTIKRGKFLAIDSDFSPVEKVKVKVQEINSSSLNIEEELEIEIKTKGTIDTKNILSQAAQILIAHLQVIGDVKNLDAVDVFEQKKQEKVEPSIHSVDITSLDLSVRSINALKRQGYTKLADILTLTEDDLVAVKNLGKKSVEEIIQKLKEYNVTLNRGEK.

Positions 1 to 246 are alpha N-terminal domain (alpha-NTD); the sequence is MKKMVQIKYK…AHLQVIGDVK (246 aa). The segment at 262–333 is alpha C-terminal domain (alpha-CTD); that stretch reads VEPSIHSVDI…YNVTLNRGEK (72 aa).

Belongs to the RNA polymerase alpha chain family. As to quaternary structure, homodimer. The RNAP catalytic core consists of 2 alpha, 1 beta, 1 beta' and 1 omega subunit. When a sigma factor is associated with the core the holoenzyme is formed, which can initiate transcription.

The enzyme catalyses RNA(n) + a ribonucleoside 5'-triphosphate = RNA(n+1) + diphosphate. Functionally, DNA-dependent RNA polymerase catalyzes the transcription of DNA into RNA using the four ribonucleoside triphosphates as substrates. This chain is DNA-directed RNA polymerase subunit alpha, found in Mycoplasmopsis pulmonis (strain UAB CTIP) (Mycoplasma pulmonis).